Here is a 476-residue protein sequence, read N- to C-terminus: Glycogen synthase (476 aa).

Residue lysine 15 participates in ADP-alpha-D-glucose binding.

This sequence belongs to the glycosyltransferase 1 family. Bacterial/plant glycogen synthase subfamily.

It catalyses the reaction [(1-&gt;4)-alpha-D-glucosyl](n) + ADP-alpha-D-glucose = [(1-&gt;4)-alpha-D-glucosyl](n+1) + ADP + H(+). It functions in the pathway glycan biosynthesis; glycogen biosynthesis. In terms of biological role, synthesizes alpha-1,4-glucan chains using ADP-glucose. In Leptospira biflexa serovar Patoc (strain Patoc 1 / Ames), this protein is Glycogen synthase.